The following is a 79-amino-acid chain: MISLSLLLMIGVESVRDGYIVDFKNCVYRCVPPCDGLCKKNGGKGGSCSFLIGSGLACWCNALPDNVPIKDPLHKCPKR.

A signal peptide spans methionine 1 to aspartate 17. Residues glycine 18–proline 77 form the LCN-type CS-alpha/beta domain. 4 disulfides stabilise this stretch: cysteine 26/cysteine 76, cysteine 30/cysteine 48, cysteine 34/cysteine 58, and cysteine 38/cysteine 60.

The protein belongs to the long (4 C-C) scorpion toxin superfamily. Sodium channel inhibitor family. Alpha subfamily. As to expression, expressed by the venom gland.

It is found in the secreted. Its function is as follows. Alpha toxins bind voltage-independently at site-3 of sodium channels (Nav) and inhibit the inactivation of the activated channels, thereby blocking neuronal transmission. This protein is weakly toxic against insects (ED(50)&gt;2 ug per 100 mg of blowfly larvae), but is inactive against mammalian sodium channels (rNav1.2a, and rNav1.4). The chain is Anti-insect Ac4 from Androctonus crassicauda (Arabian fat-tailed scorpion).